Reading from the N-terminus, the 1197-residue chain is Disease resistance-like protein CSA1 (1197 aa).

The 164-residue stretch at 15-178 (PQDQVFINFR…IIIRKVKEIL (164 aa)) folds into the TIR domain. E89 is a catalytic residue. The 271-residue stretch at 210-480 (RIKQLEEKLR…ACFRSQDENY (271 aa)) folds into the NB-ARC domain. LRR repeat units lie at residues 614–636 (LNEV…DFNP), 638–659 (NLVD…NKDA), 694–716 (TALK…NLRG), 728–749 (LISL…QVIS), 750–774 (DKLE…RLQR), 776–796 (VMLN…LGQL), 797–819 (KALE…TWGN), 820–843 (MSRL…LSVR), 845–862 (LCLN…LLNK), and 863–889 (FSQL…NLQY).

The enzyme catalyses NAD(+) + H2O = ADP-D-ribose + nicotinamide + H(+). TIR-NB-LRR receptor-like protein that functions in photomorphogenic development. May function downstream of phytochrome B (phyB) signaling. The chain is Disease resistance-like protein CSA1 from Arabidopsis thaliana (Mouse-ear cress).